Reading from the N-terminus, the 164-residue chain is Nucleotide-binding protein Mfla_1706 (164 aa).

It belongs to the YajQ family.

Its function is as follows. Nucleotide-binding protein. This chain is Nucleotide-binding protein Mfla_1706, found in Methylobacillus flagellatus (strain ATCC 51484 / DSM 6875 / VKM B-1610 / KT).